Here is a 514-residue protein sequence, read N- to C-terminus: Voltage-gated potassium channel regulatory subunit KCNG1 (514 aa).

Over 1–224 (MTLLPGDNSH…DMVERPHSGL (224 aa)) the chain is Cytoplasmic. The span at 180-196 (MEREEEEEPLDSEDQES) shows a compositional bias: acidic residues. The interval 180–205 (MEREEEEEPLDSEDQESEGPSASEGR) is disordered. The chain crosses the membrane as a helical span at residues 225–246 (PGKVFACLSVLFVTVTAVNLSV). Residues 247-267 (STLPSLREEEEQGQCSQMCHN) are Extracellular-facing. Residues 268–289 (VFIVESVCVGWFSLEFLLRFIQ) traverse the membrane as a helical segment. The Cytoplasmic portion of the chain corresponds to 290 to 300 (APSKFAFLRSP). The helical transmembrane segment at 301–321 (LTLIDLVAILPYYVTLLVDGA) threads the bilayer. The Extracellular segment spans residues 322-338 (ASSRRKPSTGNSYLDKV). The chain crosses the membrane as a helical; Voltage-sensor span at residues 339–359 (GLVLRVLRALRILYVMRLARH). The Cytoplasmic segment spans residues 360 to 374 (SLGLQTLGLTARRCT). Residues 375–396 (REFGLLLLFLCVAIALFAPLLY) traverse the membrane as a helical segment. Topologically, residues 397 to 411 (VIENEMADSPEFTSI) are extracellular. The helical intramembrane region spans 412–423 (PACYWWAVITMT). Positions 424–429 (TVGYGD) match the Selectivity filter motif. Residues 424 to 431 (TVGYGDMV) lie within the membrane without spanning it. The Extracellular portion of the chain corresponds to 432-438 (PRSTPGQ). A helical membrane pass occupies residues 439-467 (VVALSSILSGILLMAFPVTSIFHTFSRSY). The Cytoplasmic segment spans residues 468–514 (LELKQEQERVLIRRAQYLIKTKSQLSGMSQDSDILFGSASSDTRDNN).

The protein belongs to the potassium channel family. G (TC 1.A.1.2) subfamily. Kv6.1/KCNG1 sub-subfamily. As to quaternary structure, heterotetramer with KCNB1 or KCNB2.

The protein localises to the cell membrane. Functionally, regulatory alpha-subunit of the voltage-gated potassium (Kv) channel which, when coassembled with KCNB1 or KCNB2, can modulate their expression and their gating kinetics by acting on deactivation upon repolarization and inactivation during maintained depolarization. Potassium channel subunit that does not form functional channels by itself. This chain is Voltage-gated potassium channel regulatory subunit KCNG1, found in Mus musculus (Mouse).